Consider the following 159-residue polypeptide: Ribosomal RNA large subunit methyltransferase H (159 aa).

S-adenosyl-L-methionine is bound by residues L76, G108, and 127 to 132 (FGRLTL).

Belongs to the RNA methyltransferase RlmH family. Homodimer.

Its subcellular location is the cytoplasm. The catalysed reaction is pseudouridine(1915) in 23S rRNA + S-adenosyl-L-methionine = N(3)-methylpseudouridine(1915) in 23S rRNA + S-adenosyl-L-homocysteine + H(+). Specifically methylates the pseudouridine at position 1915 (m3Psi1915) in 23S rRNA. This Listeria monocytogenes serotype 4b (strain CLIP80459) protein is Ribosomal RNA large subunit methyltransferase H.